The primary structure comprises 115 residues: MEKMLLKSTTRHVRIFTAEVVDNELQFHPNKLTLDLDPDNEFIWNEDSLNEINKKFNELIKERAGKDLDDYELRKIGSEIEGLIKILLQNGQLSYNPDCRVMNYSMGLPKTNEVL.

This sequence belongs to the complex I NdhM subunit family. In terms of assembly, NDH-1 can be composed of about 15 different subunits; different subcomplexes with different compositions have been identified which probably have different functions.

It is found in the cellular thylakoid membrane. The enzyme catalyses a plastoquinone + NADH + (n+1) H(+)(in) = a plastoquinol + NAD(+) + n H(+)(out). It carries out the reaction a plastoquinone + NADPH + (n+1) H(+)(in) = a plastoquinol + NADP(+) + n H(+)(out). Functionally, NDH-1 shuttles electrons from an unknown electron donor, via FMN and iron-sulfur (Fe-S) centers, to quinones in the respiratory and/or the photosynthetic chain. The immediate electron acceptor for the enzyme in this species is believed to be plastoquinone. Couples the redox reaction to proton translocation, and thus conserves the redox energy in a proton gradient. Cyanobacterial NDH-1 also plays a role in inorganic carbon-concentration. This Prochlorococcus marinus (strain MIT 9312) protein is NAD(P)H-quinone oxidoreductase subunit M.